A 165-amino-acid polypeptide reads, in one-letter code: Putative inactive neutral ceramidase B (165 aa).

The protein belongs to the neutral ceramidase family. Ubiquitous. Expression is reduced with increasing age and in late-onset Alzheimer disease (LOAD) patients. This reduction is even more pronounced in patients with an affected mother.

The polypeptide is Putative inactive neutral ceramidase B (Homo sapiens (Human)).